The following is a 623-amino-acid chain: Leucine aminopeptidase 2 (623 aa).

Positions 1–23 (MRRCTKNSRSTNPPRDPNTLSNY) are disordered. A compositionally biased stretch (polar residues) spans 7–23 (NSRSTNPPRDPNTLSNY). A peptide contacts are provided by residues 145-147 (QCQ) and 277-282 (PYGGME). Histidine 306 contributes to the Zn(2+) binding site. Catalysis depends on glutamate 307, which acts as the Proton acceptor. Zn(2+)-binding residues include histidine 310 and glutamate 329. Tyrosine 394 serves as the catalytic Proton donor.

It belongs to the peptidase M1 family. Zn(2+) serves as cofactor.

It is found in the cytoplasm. It localises to the nucleus. The catalysed reaction is an epoxide + H2O = an ethanediol. In terms of biological role, aminopeptidase that preferentially cleaves di- and tripeptides. Also has low epoxide hydrolase activity (in vitro). Can hydrolyze the epoxide leukotriene LTA(4) but it forms preferentially 5,6-dihydroxy-7,9,11,14-eicosatetraenoic acid rather than the cytokine leukotriene B(4) as the product compared to the homologous mammalian enzyme (in vitro). This is Leucine aminopeptidase 2 from Ajellomyces capsulatus (strain NAm1 / WU24) (Darling's disease fungus).